A 469-amino-acid polypeptide reads, in one-letter code: Cytosolic Fe-S cluster assembly factor NAR1 (469 aa).

8 residues coordinate [4Fe-4S] cluster: cysteine 20, cysteine 56, cysteine 59, cysteine 62, cysteine 168, cysteine 215, cysteine 394, and cysteine 398.

It belongs to the NARF family.

Functionally, component of the cytosolic Fe/S protein assembly machinery. Required for maturation of extramitochondrial Fe/S proteins. May play a role in the transfer of pre-assembled Fe/S clusters to target apoproteins. The protein is Cytosolic Fe-S cluster assembly factor NAR1 (NAR1) of Kluyveromyces lactis (strain ATCC 8585 / CBS 2359 / DSM 70799 / NBRC 1267 / NRRL Y-1140 / WM37) (Yeast).